A 56-amino-acid chain; its full sequence is uncharacterized protein (56 aa).

This is an uncharacterized protein from Escherichia coli (strain K12).